The following is a 223-amino-acid chain: UPF0441 protein YgiB (223 aa).

Positions 201-223 are disordered; sequence ESVAKQSTMQRSAAGTSTRSMGG. Over residues 204-223 the composition is skewed to polar residues; sequence AKQSTMQRSAAGTSTRSMGG.

Belongs to the UPF0441 family.

In Salmonella gallinarum (strain 287/91 / NCTC 13346), this protein is UPF0441 protein YgiB.